Reading from the N-terminus, the 123-residue chain is uncharacterized protein (123 aa).

Disordered stretches follow at residues 1 to 21 (MGAP…KLFK) and 82 to 123 (EKTA…EDES).

This is an uncharacterized protein from Homo sapiens (Human).